Consider the following 324-residue polypeptide: MCATLCTLLDEISILILMLLLIQLEIRVSAAQGGGSHAAMSPEQYWRSILPDSTPMPISISQLLGDGYPYSPAVGLPKRGDRVQIRYGPNIYGLAASQQFFKDPTMGLFFLETNLQSSKSIKLHFANMMAGTKFLPRGEADAVPFSSKDLQEILARFGVRPGSVDASVVKNTLLECELPANKGEKKACATSLESMVDFVASSLGTRDIKAASTFLVGKDGDTPAQEYTVTGARRMAETGQLIACHPESYPYAVFMCHLTEATRAYKASLVGKDGAAVEAVAVCHTDTAEWNPKHAAFQVLGVKPGTVPVCHFVQPDVVVWTRRG.

The signal sequence occupies residues 1-30 (MCATLCTLLDEISILILMLLLIQLEIRVSA). Positions 109-323 (FFLETNLQSS…QPDVVVWTRR (215 aa)) constitute a BURP domain.

Expressed in panicles.

In Oryza sativa subsp. japonica (Rice), this protein is BURP domain-containing protein 5 (BURP5).